The sequence spans 446 residues: tRNA-2-methylthio-N(6)-dimethylallyladenosine synthase (446 aa).

An MTTase N-terminal domain is found at lysine 3–serine 120. Residues cysteine 12, cysteine 49, cysteine 83, cysteine 157, cysteine 161, and cysteine 164 each coordinate [4Fe-4S] cluster. One can recognise a Radical SAM core domain in the interval arginine 143–glutamate 375. The TRAM domain occupies arginine 378 to aspartate 442.

This sequence belongs to the methylthiotransferase family. MiaB subfamily. As to quaternary structure, monomer. [4Fe-4S] cluster is required as a cofactor.

Its subcellular location is the cytoplasm. It catalyses the reaction N(6)-dimethylallyladenosine(37) in tRNA + (sulfur carrier)-SH + AH2 + 2 S-adenosyl-L-methionine = 2-methylsulfanyl-N(6)-dimethylallyladenosine(37) in tRNA + (sulfur carrier)-H + 5'-deoxyadenosine + L-methionine + A + S-adenosyl-L-homocysteine + 2 H(+). In terms of biological role, catalyzes the methylthiolation of N6-(dimethylallyl)adenosine (i(6)A), leading to the formation of 2-methylthio-N6-(dimethylallyl)adenosine (ms(2)i(6)A) at position 37 in tRNAs that read codons beginning with uridine. This is tRNA-2-methylthio-N(6)-dimethylallyladenosine synthase from Pseudomonas aeruginosa (strain UCBPP-PA14).